Consider the following 501-residue polypeptide: Solute carrier family 2, facilitated glucose transporter member 5 (501 aa).

Met1 carries the post-translational modification N-acetylmethionine. Residues 1-18 (MEPQDPVKREGRLTPVIV) are Cytoplasmic-facing. Residues 19–39 (LATLIAAFGSSFQYGYNVATI) form a helical membrane-spanning segment. Tyr32 contributes to the D-fructose binding site. The Extracellular portion of the chain corresponds to 40 to 68 (NSPSEFMKDFYNYTYYDRVGEYMNEFYLT). The N-linked (GlcNAc...) asparagine glycan is linked to Asn51. The helical transmembrane segment at 69–91 (LLWSVTVSMFPFGGFLGSLMVGP) threads the bilayer. Topologically, residues 92–98 (LVNNLGR) are cytoplasmic. Residues 99-119 (KGTLLFNNIFSIVPALLMGFS) traverse the membrane as a helical segment. Residues 120–126 (DLAKSFE) lie on the Extracellular side of the membrane. Residues 127-149 (MIIVARVLVGICAGLSSNVVPMY) form a helical membrane-spanning segment. Residues 150-161 (LGELAPKNWRGA) lie on the Cytoplasmic side of the membrane. Residues 162–182 (LGVVPQLFITIGILVAQIFGL) form a helical membrane-spanning segment. Gln167 contributes to the D-fructose binding site. Over 183–192 (RSLLANEEGW) the chain is Extracellular. The chain crosses the membrane as a helical span at residues 193–213 (PILLGLTGIPAVLQLLFLPFF). At 214 to 277 (PESPRYLLIQ…LFKMRSLRWQ (64 aa)) the chain is on the cytoplasmic side. Residues 278-298 (VISIIVLMAGQQLSGVNAIYY) form a helical membrane-spanning segment. D-fructose contacts are provided by residues Gln288 and 296–298 (IYY). Residues 299–313 (YADQIYLSAGVKEDD) are Extracellular-facing. A helical membrane pass occupies residues 314–334 (VQYVTAGTGAVNVLITVCAIF). Topologically, residues 335-342 (VVELMGRR) are cytoplasmic. A helical transmembrane segment spans residues 343–363 (FLLLLGFSVCFTACCVLTGAL). The Extracellular portion of the chain corresponds to 364–371 (AMQDVISW). A helical membrane pass occupies residues 372-394 (MPYVSIACVISYVIGHALGPSPI). His387 contributes to the D-fructose binding site. Residues 395–412 (PALLVTEIFLQSSRPAAY) lie on the Cytoplasmic side of the membrane. The chain crosses the membrane as a helical span at residues 413–433 (MVAGTVHWLSNFTVGLVFPFI). Position 419–420 (419–420 (HW)) interacts with D-fructose. Over 434 to 439 (QVGLGA) the chain is Extracellular. The chain crosses the membrane as a helical span at residues 440-460 (YSFVIFAVICFLTTVYIFLII). Residues 461-501 (PETKSKTFIEINQIFIKMNKVPGVHPEKEELKEFPPSTARQ) are Cytoplasmic-facing.

This sequence belongs to the major facilitator superfamily. Sugar transporter (TC 2.A.1.1) family. Glucose transporter subfamily.

Its subcellular location is the apical cell membrane. It localises to the cell membrane. It is found in the sarcolemma. It catalyses the reaction D-fructose(out) = D-fructose(in). In terms of biological role, functions as a fructose transporter that has only low activity with other monosaccharides. Can mediate the uptake of deoxyglucose, but with low efficiency. Essential for fructose uptake in the small intestine. Plays a role in the regulation of salt uptake and blood pressure in response to dietary fructose. Required for the development of high blood pressure in response to high dietary fructose intake. In Ovis aries (Sheep), this protein is Solute carrier family 2, facilitated glucose transporter member 5.